The sequence spans 334 residues: S-adenosylmethionine decarboxylase proenzyme (334 aa).

Phenylalanine 7 contributes to the substrate binding site. Residues glutamate 8 and glutamate 11 contribute to the active site. Glutamate 67 contacts substrate. Serine 68 functions as the Schiff-base intermediate with substrate; via pyruvic acid in the catalytic mechanism. At serine 68 the chain carries Pyruvic acid (Ser); by autocatalysis. The Proton donor; for catalytic activity role is filled by cysteine 82. Position 223 (phenylalanine 223) interacts with substrate. Residues serine 229 and histidine 243 each act as proton acceptor; for processing activity in the active site. Substrate is bound at residue glutamate 247. Serine 298 carries the phosphoserine modification.

It belongs to the eukaryotic AdoMetDC family. Heterotetramer of two alpha and two beta chains. The cofactor is pyruvate. Post-translationally, is synthesized initially as an inactive proenzyme. Formation of the active enzyme involves a self-maturation process in which the active site pyruvoyl group is generated from an internal serine residue via an autocatalytic post-translational modification. Two non-identical subunits are generated from the proenzyme in this reaction, and the pyruvate is formed at the N-terminus of the alpha chain, which is derived from the carboxyl end of the proenzyme. The post-translation cleavage follows an unusual pathway, termed non-hydrolytic serinolysis, in which the side chain hydroxyl group of the serine supplies its oxygen atom to form the C-terminus of the beta chain, while the remainder of the serine residue undergoes an oxidative deamination to produce ammonia and the pyruvoyl group blocking the N-terminus of the alpha chain.

It catalyses the reaction S-adenosyl-L-methionine + H(+) = S-adenosyl 3-(methylsulfanyl)propylamine + CO2. It functions in the pathway amine and polyamine biosynthesis; S-adenosylmethioninamine biosynthesis; S-adenosylmethioninamine from S-adenosyl-L-methionine: step 1/1. Essential for biosynthesis of the polyamines spermidine and spermine. Promotes maintenance and self-renewal of embryonic stem cells, by maintaining spermine levels. In Bos taurus (Bovine), this protein is S-adenosylmethionine decarboxylase proenzyme (AMD1).